Consider the following 357-residue polypeptide: NADPH HC-toxin reductase 1 (357 aa).

Residues Arg40, Lys47, Asp68–Leu69, Val88–Thr90, Tyr178, Lys182, Leu207–Val210, and Thr222 each bind NADP(+). Residue Lys182 is the Proton donor of the active site.

This sequence belongs to the NAD(P)-dependent epimerase/dehydratase family.

With respect to regulation, activity is sensitive to heat, dependent on NADPH, and inhibited by p-hydroxymercuribenzoate and disulfiram. Its function is as follows. In tandem with Hm2, NADPH-dependent Helminthosporium carbonum (HC) toxin reductase (HCTR), which inactivates HC toxin, a cyclic tetrapeptide produced by the fungus Cochliobolus carbonum to permit infection and acting as an inhibitor of host histone deacetylases (HDACs), thus conferring resistance against C.carbonum race 1 in resistant cultivars (e.g. cv. B73 and cv. Wisconsin 22). Catalyzes the production of 8-hydroxy derivative of HC-toxin via the reduction of the 8-keto group of 2-amino-9,10-epoxy-8-oxo-decanoic acid, an amino acid of the HC-toxin. This chain is NADPH HC-toxin reductase 1, found in Zea mays (Maize).